The following is a 118-amino-acid chain: Large ribosomal subunit protein uL18 (118 aa).

This sequence belongs to the universal ribosomal protein uL18 family. As to quaternary structure, part of the 50S ribosomal subunit; part of the 5S rRNA/L5/L18/L25 subcomplex. Contacts the 5S and 23S rRNAs.

Functionally, this is one of the proteins that bind and probably mediate the attachment of the 5S RNA into the large ribosomal subunit, where it forms part of the central protuberance. The protein is Large ribosomal subunit protein uL18 of Helicobacter pylori (strain J99 / ATCC 700824) (Campylobacter pylori J99).